A 397-amino-acid polypeptide reads, in one-letter code: Acetate kinase (397 aa).

Asn7 contacts Mg(2+). Lys14 serves as a coordination point for ATP. Arg90 serves as a coordination point for substrate. The active-site Proton donor/acceptor is Asp147. Residues 207–211 (HLGNG), 282–284 (DFR), and 330–334 (GLGEN) contribute to the ATP site. Glu383 provides a ligand contact to Mg(2+).

This sequence belongs to the acetokinase family. In terms of assembly, homodimer. Mg(2+) is required as a cofactor. Requires Mn(2+) as cofactor.

It is found in the cytoplasm. It catalyses the reaction acetate + ATP = acetyl phosphate + ADP. Its pathway is metabolic intermediate biosynthesis; acetyl-CoA biosynthesis; acetyl-CoA from acetate: step 1/2. Catalyzes the formation of acetyl phosphate from acetate and ATP. Can also catalyze the reverse reaction. This chain is Acetate kinase, found in Clostridium botulinum (strain Kyoto / Type A2).